Here is a 116-residue protein sequence, read N- to C-terminus: Tachykinin-3 (116 aa).

Residues 1–20 form the signal peptide; that stretch reads MRSAMLFAAVLALSLAWTFG. A propeptide spanning residues 21-79 is cleaved from the precursor; it reads AVCEEPQGQGGRLSKDSDLYQLPPSLLRRLYDSRPVSLEGLLKVLSKASVGPKETSLPQ. Methionine amide is present on methionine 91. Residues 93 to 116 form a disordered region; it reads KRNSQPDTPTDVVEENTPSFGILK. Residues 95 to 116 constitute a propeptide that is removed on maturation; that stretch reads NSQPDTPTDVVEENTPSFGILK.

It belongs to the tachykinin family.

It is found in the secreted. Tachykinins are active peptides which excite neurons, evoke behavioral responses, are potent vasodilators and secretagogues, and contract (directly or indirectly) many smooth muscles. Is a critical central regulator of gonadal function. The polypeptide is Tachykinin-3 (Tac3) (Mus musculus (Mouse)).